A 199-amino-acid chain; its full sequence is Nitrile hydratase subunit alpha (199 aa).

Residues Cys-102, Cys-105, Ser-106, and Cys-107 each contribute to the Fe(3+) site. Cys-105 carries the cysteine sulfinic acid (-SO2H) modification. At Cys-107 the chain carries Cysteine sulfenic acid (-SOH).

This sequence belongs to the nitrile hydratase subunit alpha family. In terms of assembly, heterodimer of an alpha and a beta chain. Requires Fe(3+) as cofactor. In terms of processing, oxidation on Cys-105 is essential for the activity. Oxidation on Cys-107 stabilizes the Fe-NO ligand coordinated in the inactive form.

It carries out the reaction an aliphatic primary amide = an aliphatic nitrile + H2O. Inactivated by oxidation of Cys-107 to a sulfenic acid. Its function is as follows. NHase catalyzes the hydration of various nitrile compounds to the corresponding amides. Industrial production of acrylamide is now being developed using some of the enzymes of this class. The chain is Nitrile hydratase subunit alpha (nthA) from Rhodococcus sp.